The following is a 488-amino-acid chain: Inosine-5'-monophosphate dehydrogenase (488 aa).

2 CBS domains span residues 95 to 153 (VISN…SIKI) and 157 to 216 (MTKE…AKDE). NAD(+)-binding positions include D250 and 300-302 (GIG). G302 and G304 together coordinate K(+). S305 provides a ligand contact to IMP. A K(+)-binding site is contributed by C307. The Thioimidate intermediate role is filled by C307. Residues 340–342 (DGG), 363–364 (GS), and 387–391 (YRGMG) contribute to the IMP site. R403 acts as the Proton acceptor in catalysis. Position 417 (E417) interacts with IMP. Positions 467-488 (AGLAESHPHDVQITKESPNYSF) are disordered. Positions 471, 472, and 473 each coordinate K(+).

The protein belongs to the IMPDH/GMPR family. Homotetramer. It depends on K(+) as a cofactor.

The enzyme catalyses IMP + NAD(+) + H2O = XMP + NADH + H(+). It functions in the pathway purine metabolism; XMP biosynthesis via de novo pathway; XMP from IMP: step 1/1. Mycophenolic acid (MPA) is a non-competitive inhibitor that prevents formation of the closed enzyme conformation by binding to the same site as the amobile flap. In contrast, mizoribine monophosphate (MZP) is a competitive inhibitor that induces the closed conformation. MPA is a potent inhibitor of mammalian IMPDHs but a poor inhibitor of the bacterial enzymes. MZP is a more potent inhibitor of bacterial IMPDH. In terms of biological role, catalyzes the conversion of inosine 5'-phosphate (IMP) to xanthosine 5'-phosphate (XMP), the first committed and rate-limiting step in the de novo synthesis of guanine nucleotides, and therefore plays an important role in the regulation of cell growth. The chain is Inosine-5'-monophosphate dehydrogenase from Staphylococcus saprophyticus subsp. saprophyticus (strain ATCC 15305 / DSM 20229 / NCIMB 8711 / NCTC 7292 / S-41).